The chain runs to 367 residues: DNA replication and repair protein RecF (367 aa).

An ATP-binding site is contributed by 31–38; sequence GENGSGKT.

The protein belongs to the RecF family.

Its subcellular location is the cytoplasm. Functionally, the RecF protein is involved in DNA metabolism; it is required for DNA replication and normal SOS inducibility. RecF binds preferentially to single-stranded, linear DNA. It also seems to bind ATP. The protein is DNA replication and repair protein RecF of Saccharophagus degradans (strain 2-40 / ATCC 43961 / DSM 17024).